A 287-amino-acid chain; its full sequence is Ribosomal RNA small subunit methyltransferase A (287 aa).

6 residues coordinate S-adenosyl-L-methionine: asparagine 18, leucine 20, glycine 45, glutamate 66, aspartate 91, and asparagine 118.

The protein belongs to the class I-like SAM-binding methyltransferase superfamily. rRNA adenine N(6)-methyltransferase family. RsmA subfamily.

The protein localises to the cytoplasm. It carries out the reaction adenosine(1518)/adenosine(1519) in 16S rRNA + 4 S-adenosyl-L-methionine = N(6)-dimethyladenosine(1518)/N(6)-dimethyladenosine(1519) in 16S rRNA + 4 S-adenosyl-L-homocysteine + 4 H(+). Its function is as follows. Specifically dimethylates two adjacent adenosines (A1518 and A1519) in the loop of a conserved hairpin near the 3'-end of 16S rRNA in the 30S particle. May play a critical role in biogenesis of 30S subunits. The protein is Ribosomal RNA small subunit methyltransferase A of Haemophilus influenzae (strain PittEE).